A 212-amino-acid chain; its full sequence is Suppressor of cytokine signaling 1 (212 aa).

The tract at residues 1–55 is disordered; that stretch reads MVARNQVAADNAISPAAEPRRRSEPSSSSSSSSPAAPVRPRPCPAVPAPAPGDTH. Low complexity predominate over residues 25 to 36; that stretch reads PSSSSSSSSPAA. The span at 37–50 shows a compositional bias: pro residues; that stretch reads PVRPRPCPAVPAPA. Residues 56–67 form a kinase inhibitory region (KIR) region; the sequence is FRTFRSHSDYRR. An extended SH2 subdomain (ESS) region spans residues 68–79; sequence ITRTSALLDACG. The SH2 domain occupies 80-175; sequence FYWGPLSVHG…PLRQRRVRPL (96 aa). Residues 162 to 211 form the SOCS box domain; it reads MLGAPLRQRRVRPLQELCRQRIVAAVGRENLARIPLNPVLRDYLSSFPFQ. The interaction with Elongin BC complex stretch occupies residues 174 to 183; it reads PLQELCRQRI.

This sequence belongs to the SOCS1 family. In terms of assembly, interacts with multiple activated proteins of the tyrosine kinase signaling pathway including JAK family kinases, TEC, KIT, GRB2 and VAV. Binding to JAKs is mediated through the KIR and SH2 domain to a phosphorylated tyrosine residue within the JAK JH1 domain. Binds the SH3 domain of GRB2 via diproline determinants in the N-terminus, and the N-terminal regulatory domain of VAV. Interacts with the Elongin BC complex (ELOB and ELOC). Component of an ECS CBC(SOCS1) E3 ubiquitin-protein ligase complex which contains Elongin BC, CUL5, RBX1 and SOCS1. Interacts (via SH2 domain and SOCS box) with TRIM8. Interacts with CUL2. Interacts with AXL and FGFR3. Interacts with INSR. Interacts with TRIM8. Interacts with DCUN1D1. Interacts with IFNGR1. As to expression, high expression in thymus. Lower expression in lung and spleen. Expressed in both Th1 and Th2 cells.

Its subcellular location is the nucleus. The protein resides in the cytoplasmic vesicle. It functions in the pathway protein modification; protein ubiquitination. In terms of biological role, essential negative regulator of type I and type II interferon (IFN) signaling, as well as that of other cytokines, including IL2, IL4, IL6 and leukemia inhibitory factor (LIF). Downregulates cytokine signaling by inhibiting the JAK/STAT signaling pathway. Acts by binding to JAK proteins and to IFNGR1 and inhibiting their kinase activity. In vitro, suppresses Tec protein-tyrosine activity. Regulates IFN-gamma (IFNG)-mediated sensory neuron survival. Probable substrate recognition component of an ECS (Elongin BC-CUL2/5-SOCS-box protein) E3 ubiquitin ligase complex which mediates the ubiquitination and subsequent proteasomal degradation of target proteins. This Mus musculus (Mouse) protein is Suppressor of cytokine signaling 1.